We begin with the raw amino-acid sequence, 341 residues long: UDP-3-O-acylglucosamine N-acyltransferase (341 aa).

The active-site Proton acceptor is the His-236.

This sequence belongs to the transferase hexapeptide repeat family. LpxD subfamily. As to quaternary structure, homotrimer.

The catalysed reaction is a UDP-3-O-[(3R)-3-hydroxyacyl]-alpha-D-glucosamine + a (3R)-hydroxyacyl-[ACP] = a UDP-2-N,3-O-bis[(3R)-3-hydroxyacyl]-alpha-D-glucosamine + holo-[ACP] + H(+). Its pathway is bacterial outer membrane biogenesis; LPS lipid A biosynthesis. Catalyzes the N-acylation of UDP-3-O-acylglucosamine using 3-hydroxyacyl-ACP as the acyl donor. Is involved in the biosynthesis of lipid A, a phosphorylated glycolipid that anchors the lipopolysaccharide to the outer membrane of the cell. This Lawsonia intracellularis (strain PHE/MN1-00) protein is UDP-3-O-acylglucosamine N-acyltransferase.